A 117-amino-acid polypeptide reads, in one-letter code: Ribulose bisphosphate carboxylase small subunit 1 (117 aa).

The protein belongs to the RuBisCO small chain family. In terms of assembly, heterohexadecamer of 8 large and 8 small subunits.

RuBisCO catalyzes two reactions: the carboxylation of D-ribulose 1,5-bisphosphate, the primary event in carbon dioxide fixation, as well as the oxidative fragmentation of the pentose substrate. Both reactions occur simultaneously and in competition at the same active site. Although the small subunit is not catalytic it is essential for maximal activity. In Hydrogenovibrio marinus, this protein is Ribulose bisphosphate carboxylase small subunit 1.